Here is a 683-residue protein sequence, read N- to C-terminus: MKRVTLGGGKAVHYSTTPDGFMASPACGGNRASERYVPTDADVTCKRCAKILAAEAEREERLNRDPRGDEWMGRTIGDAVTVTLHGRTFDTELTGADHITPGWTVAYVDEDGQRNGTFVVVTDADIQDGDKVSDPRKDAFDKARALGMDWAEALDYANAKTAEMAQPTHVSSVESATHDNDDNKGTGTMATKKLKLKDVRGDVRIGAVPGADAIHALRNAVDENGRNLPMCRTRTKNPIQYWGPAAEQKPELELCAGCSKVVPTGEVSVSEESVEVPGLSMTVSQKSYTPVEGDDKGENMAAKNDTQDVDAQISAVHGHVDNIKTAETVEAVKEAAEAAEGIITTLPTKHRNTLRSTVKEARTARETELTPVTPEAEAAKAEVESRRSADVAEDFNDIEGVPDLIKDGVKLFSQGVDLGLKLTNAGEKLAHVMLTMRQKIVNPATGLPDLTAERKTTKNAAAEVYAQAKKRIADDDVERQGAHNSLVRATQNKASDVLVDWLRAFDGPDRKESLAVASELFGDKLDGLKDDASISEAIYRLYAGQGIELPRYGRTELARYDRRVKAIEGATKELETLTDGDKDANPKDVEALEEKIKELKAEVPEEILTEKLEPKAEKSDAEKTADALKVIRAQVDKAGKRFAKVKTANEKRKAKAELYSIIRAAADAFDLDLSALVTADEDE.

The sequence is that of Repressor protein C (C) from Streptomyces phage phiC31 (Bacteriophage phi-C31).